Here is a 249-residue protein sequence, read N- to C-terminus: Segregation and condensation protein A (249 aa).

The protein belongs to the ScpA family. Component of a cohesin-like complex composed of ScpA, ScpB and the Smc homodimer, in which ScpA and ScpB bind to the head domain of Smc. The presence of the three proteins is required for the association of the complex with DNA.

It localises to the cytoplasm. Functionally, participates in chromosomal partition during cell division. May act via the formation of a condensin-like complex containing Smc and ScpB that pull DNA away from mid-cell into both cell halves. The chain is Segregation and condensation protein A from Listeria innocua serovar 6a (strain ATCC BAA-680 / CLIP 11262).